A 101-amino-acid polypeptide reads, in one-letter code: NADH-quinone oxidoreductase subunit K (101 aa).

Helical transmembrane passes span 4–24, 30–50, and 61–81; these read LGHYLTLGAILFALSVIGIFL, IVLLMCIELMLLAVNLNFVAF, and VFVFFILTVAAAESAIGLAIL.

This sequence belongs to the complex I subunit 4L family. As to quaternary structure, NDH-1 is composed of 14 different subunits. Subunits NuoA, H, J, K, L, M, N constitute the membrane sector of the complex.

The protein resides in the cell inner membrane. It catalyses the reaction a quinone + NADH + 5 H(+)(in) = a quinol + NAD(+) + 4 H(+)(out). NDH-1 shuttles electrons from NADH, via FMN and iron-sulfur (Fe-S) centers, to quinones in the respiratory chain. The immediate electron acceptor for the enzyme in this species is believed to be ubiquinone. Couples the redox reaction to proton translocation (for every two electrons transferred, four hydrogen ions are translocated across the cytoplasmic membrane), and thus conserves the redox energy in a proton gradient. This is NADH-quinone oxidoreductase subunit K from Leptothrix cholodnii (strain ATCC 51168 / LMG 8142 / SP-6) (Leptothrix discophora (strain SP-6)).